We begin with the raw amino-acid sequence, 541 residues long: Transmembrane protein 87A (541 aa).

Residues 1–26 (MAAASFQPLKCLLLWVFFVITPPVKA) form the signal peptide. Over 27-209 (VPEPGIWTVP…HGFISASDWP (183 aa)) the chain is Lumenal. N-linked (GlcNAc...) asparagine glycans are attached at residues Asn-52, Asn-109, Asn-148, and Asn-189. 2 disulfide bridges follow: Cys-65/Cys-116 and Cys-82/Cys-416. Residues 210–230 (LMIFYMVMCIMYILLALLWFI) form a helical membrane-spanning segment. The Cytoplasmic portion of the chain corresponds to 231–241 (WSACYWKDLLR). A helical membrane pass occupies residues 242–262 (IQFWIAAVIFLGMLEKAVYYA). At 263-293 (EYQNTDNTGVSSHGLLIFAELISSIKRTLAR) the chain is on the lumenal side. The helical transmembrane segment at 294-314 (LLVTIVSLGYGIIKPRLGAVM) threads the bilayer. At 315–316 (HR) the chain is on the cytoplasmic side. A helical transmembrane segment spans residues 317 to 337 (VVGMGVLYFVFAAVEGVMRII). At 338–344 (GAKEYDL) the chain is on the lumenal side. A helical transmembrane segment spans residues 345–365 (VLLAGIPLALLDSGLCWWIFV). Topologically, residues 366–384 (SLAQTMKTLKLRKNTVKYS) are cytoplasmic. Residues 385–405 (LYRHFTNTLIFAILASIIFMI) traverse the membrane as a helical segment. The Lumenal segment spans residues 406–422 (WRTKKFQLVDCQADWME). The helical transmembrane segment at 423 to 443 (LWVDDAYWRFLFFIILLVIMF) threads the bilayer. Topologically, residues 444–541 (LWRPSANNQR…MTKYEMSKIE (98 aa)) are cytoplasmic.

The protein belongs to the LU7TM family. TMEM87 subfamily.

It is found in the cell membrane. Its subcellular location is the golgi apparatus membrane. In terms of biological role, potential monoatomic ion channel gated by mechanical force, implicated in normal touch sensitivity through the generation of mechanically activated currents. However, a direct channel activity is debated and an alternative could be that it functions as a chaperone for an unidentified mechanosensitive ion channel. Could also be involved in cell mechanosensitivity regulating cell adhesion and migration. May also be involved in retrograde transport from endosomes to the trans-Golgi network (TGN). In Xenopus tropicalis (Western clawed frog), this protein is Transmembrane protein 87A.